A 314-amino-acid chain; its full sequence is Polyamine aminopropyltransferase (314 aa).

Positions 4–241 (GMYFFEHVTP…LNFGFLLASD (238 aa)) constitute a PABS domain. Q33 serves as a coordination point for S-methyl-5'-thioadenosine. The spermidine site is built by H64 and E88. Residues D108 and 140–141 (DA) each bind S-methyl-5'-thioadenosine. D158 serves as the catalytic Proton acceptor. P168 is a binding site for S-methyl-5'-thioadenosine.

This sequence belongs to the spermidine/spermine synthase family. Homodimer or homotetramer.

It localises to the cytoplasm. The enzyme catalyses S-adenosyl 3-(methylsulfanyl)propylamine + putrescine = S-methyl-5'-thioadenosine + spermidine + H(+). It participates in amine and polyamine biosynthesis; spermidine biosynthesis; spermidine from putrescine: step 1/1. Functionally, catalyzes the irreversible transfer of a propylamine group from the amino donor S-adenosylmethioninamine (decarboxy-AdoMet) to putrescine (1,4-diaminobutane) to yield spermidine. The protein is Polyamine aminopropyltransferase of Thermus thermophilus (strain ATCC BAA-163 / DSM 7039 / HB27).